Reading from the N-terminus, the 447-residue chain is UDP-N-acetylmuramate--L-alanine ligase (447 aa).

Residue 107–113 participates in ATP binding; that stretch reads GTHGKTT.

This sequence belongs to the MurCDEF family.

The protein localises to the cytoplasm. It catalyses the reaction UDP-N-acetyl-alpha-D-muramate + L-alanine + ATP = UDP-N-acetyl-alpha-D-muramoyl-L-alanine + ADP + phosphate + H(+). It functions in the pathway cell wall biogenesis; peptidoglycan biosynthesis. Functionally, cell wall formation. This chain is UDP-N-acetylmuramate--L-alanine ligase, found in Rubrobacter xylanophilus (strain DSM 9941 / JCM 11954 / NBRC 16129 / PRD-1).